Reading from the N-terminus, the 295-residue chain is 4-diphosphocytidyl-2-C-methyl-D-erythritol kinase (295 aa).

Lys25 is an active-site residue. Position 108–118 (Pro108–Ser118) interacts with ATP. Asp150 is a catalytic residue.

It belongs to the GHMP kinase family. IspE subfamily.

It catalyses the reaction 4-CDP-2-C-methyl-D-erythritol + ATP = 4-CDP-2-C-methyl-D-erythritol 2-phosphate + ADP + H(+). It functions in the pathway isoprenoid biosynthesis; isopentenyl diphosphate biosynthesis via DXP pathway; isopentenyl diphosphate from 1-deoxy-D-xylulose 5-phosphate: step 3/6. In terms of biological role, catalyzes the phosphorylation of the position 2 hydroxy group of 4-diphosphocytidyl-2C-methyl-D-erythritol. This is 4-diphosphocytidyl-2-C-methyl-D-erythritol kinase from Pasteurella multocida (strain Pm70).